The sequence spans 116 residues: Iron-sulfur cluster insertion protein ErpA (116 aa).

Residues cysteine 44, cysteine 108, and cysteine 110 each coordinate iron-sulfur cluster.

Belongs to the HesB/IscA family. In terms of assembly, homodimer. Iron-sulfur cluster is required as a cofactor.

Its function is as follows. Required for insertion of 4Fe-4S clusters for at least IspG. This Shewanella denitrificans (strain OS217 / ATCC BAA-1090 / DSM 15013) protein is Iron-sulfur cluster insertion protein ErpA.